The following is a 745-amino-acid chain: Elongation factor G, mitochondrial (745 aa).

Positions 40–317 (ERIRNIGISA…AVLDYLPNPG (278 aa)) constitute a tr-type G domain. GTP is bound by residues 49–56 (AHIDSGKT), 116–120 (DTPGH), and 170–173 (NKLD).

This sequence belongs to the TRAFAC class translation factor GTPase superfamily. Classic translation factor GTPase family. EF-G/EF-2 subfamily.

Its subcellular location is the mitochondrion. Its pathway is protein biosynthesis; polypeptide chain elongation. In terms of biological role, mitochondrial GTPase that catalyzes the GTP-dependent ribosomal translocation step during translation elongation. During this step, the ribosome changes from the pre-translocational (PRE) to the post-translocational (POST) state as the newly formed A-site-bound peptidyl-tRNA and P-site-bound deacylated tRNA move to the P and E sites, respectively. Catalyzes the coordinated movement of the two tRNA molecules, the mRNA and conformational changes in the ribosome. Essential during development as it acts as a retrograde signal from mitochondria to the nucleus to slow down cell proliferation if mitochondrial energy output is low. This is Elongation factor G, mitochondrial from Drosophila melanogaster (Fruit fly).